Reading from the N-terminus, the 154-residue chain is MIKIISVGTIKEKYFLQACEEYKKRLSRWVKVEEIEIKEEDENKYFNIETLLEKEADKILKHVKEGEFIIVCDINGIELSSEEFSEILRKNINSSKNITFIIGSSNGLSNEVKRRADLLLSFSKLTFPHQLFRVLLYEQIYRGLSIIYGTKYHK.

Residues glycine 103 and 122 to 127 (FSKLTF) contribute to the S-adenosyl-L-methionine site.

It belongs to the RNA methyltransferase RlmH family. Homodimer.

The protein localises to the cytoplasm. It catalyses the reaction pseudouridine(1915) in 23S rRNA + S-adenosyl-L-methionine = N(3)-methylpseudouridine(1915) in 23S rRNA + S-adenosyl-L-homocysteine + H(+). In terms of biological role, specifically methylates the pseudouridine at position 1915 (m3Psi1915) in 23S rRNA. The protein is Ribosomal RNA large subunit methyltransferase H of Caldicellulosiruptor bescii (strain ATCC BAA-1888 / DSM 6725 / KCTC 15123 / Z-1320) (Anaerocellum thermophilum).